Here is a 494-residue protein sequence, read N- to C-terminus: Aspartyl/glutamyl-tRNA(Asn/Gln) amidotransferase subunit B (494 aa).

This sequence belongs to the GatB/GatE family. GatB subfamily. As to quaternary structure, heterotrimer of A, B and C subunits.

The catalysed reaction is L-glutamyl-tRNA(Gln) + L-glutamine + ATP + H2O = L-glutaminyl-tRNA(Gln) + L-glutamate + ADP + phosphate + H(+). It catalyses the reaction L-aspartyl-tRNA(Asn) + L-glutamine + ATP + H2O = L-asparaginyl-tRNA(Asn) + L-glutamate + ADP + phosphate + 2 H(+). Functionally, allows the formation of correctly charged Asn-tRNA(Asn) or Gln-tRNA(Gln) through the transamidation of misacylated Asp-tRNA(Asn) or Glu-tRNA(Gln) in organisms which lack either or both of asparaginyl-tRNA or glutaminyl-tRNA synthetases. The reaction takes place in the presence of glutamine and ATP through an activated phospho-Asp-tRNA(Asn) or phospho-Glu-tRNA(Gln). This chain is Aspartyl/glutamyl-tRNA(Asn/Gln) amidotransferase subunit B, found in Rhodopseudomonas palustris (strain BisB18).